A 191-amino-acid chain; its full sequence is Dephospho-CoA kinase (191 aa).

A DPCK domain is found at 3 to 191 (AIGITGSYAS…KLIKNLECQV (189 aa)). 11-16 (ASGKTF) provides a ligand contact to ATP.

It belongs to the CoaE family.

It is found in the cytoplasm. It carries out the reaction 3'-dephospho-CoA + ATP = ADP + CoA + H(+). Its pathway is cofactor biosynthesis; coenzyme A biosynthesis; CoA from (R)-pantothenate: step 5/5. Catalyzes the phosphorylation of the 3'-hydroxyl group of dephosphocoenzyme A to form coenzyme A. The sequence is that of Dephospho-CoA kinase from Rickettsia typhi (strain ATCC VR-144 / Wilmington).